The chain runs to 440 residues: Discs overgrown protein kinase (440 aa).

Positions 9–277 constitute a Protein kinase domain; the sequence is YRLGRKIGSG…HLRKLFRNLF (269 aa). ATP is bound by residues 15-23 and K38; that span reads IGSGSFGDI. Catalysis depends on D128, which acts as the Proton acceptor. The nuclear localization signal; essential for interaction with Bdbt and important for nuclear localization stretch occupies residues 221-224; that stretch reads KRQK. 2 positions are modified to phosphoserine: S333 and S334. The interval 376–440 is disordered; sequence SQLIGGNGLN…GGGGGVGNAK (65 aa). The span at 413–440 shows a compositional bias: gly residues; it reads QGGGGGGGGVGVGGMPSGGGGGGVGNAK.

This sequence belongs to the protein kinase superfamily. CK1 Ser/Thr protein kinase family. Casein kinase I subfamily. As to quaternary structure, forms a complex with per. Interacts with Dlish. Interacts (via nuclear localization signal) with Bdbt. As to expression, detected in the head (at protein level). Expressed in photoreceptor cells of the eyes as well as in the region situated between the optic lobe and the central brain.

It is found in the nucleus. Its subcellular location is the cytoplasm. It localises to the cytosol. It catalyses the reaction L-seryl-[protein] + ATP = O-phospho-L-seryl-[protein] + ADP + H(+). The enzyme catalyses L-threonyl-[protein] + ATP = O-phospho-L-threonyl-[protein] + ADP + H(+). Serine/threonine-protein kinase which is involved in the circadian rhythm pathway, viability and planar cell polarity. In the circadian rhythm pathway, phosphorylates the clock gene period (per) and targets it for degradation in the absence of timeless (tim), thus contributing to production of the circadian oscillations of the clock genes. Together with CkIalpha, regulates processing of ci by phosphorylating it, which promotes its binding to slmb, the F-box recognition component of the SCF(slmb) E3 ubiquitin-protein ligase. Involved in the inhibition of apoptosis during cell proliferation and growth arrest in imaginal disks. Also functions in planar cell polarity. The protein is Discs overgrown protein kinase (dco) of Drosophila melanogaster (Fruit fly).